A 313-amino-acid polypeptide reads, in one-letter code: Homeobox protein knotted-1-like 2 (313 aa).

The tract at residues 13–40 (DPSSAAASSPNPSFSPGGGGGGGVGGGE) is disordered. Over residues 14 to 27 (PSSAAASSPNPSFS) the composition is skewed to low complexity. Over residues 28–38 (PGGGGGGGVGG) the composition is skewed to gly residues. One can recognise an ELK domain in the interval 205 to 225 (ELKNELKQGYKEKLVDIREEI). A DNA-binding region (homeobox; TALE-type) is located at residues 226-289 (LRKRRAGKLP…NQRKRNWHSN (64 aa)). Residues 282-313 (RKRNWHSNPASSGEKTKKKRNVTGDGGAEQSW) are disordered.

This sequence belongs to the TALE/KNOX homeobox family. Isoform 1 is expressed in roots, leaf blades, leaf sheaths and flowers. Isoform 2 is expressed in leaf blades, leaf sheaths and flowers.

The protein resides in the nucleus. This chain is Homeobox protein knotted-1-like 2 (HOS58), found in Oryza sativa subsp. japonica (Rice).